A 156-amino-acid polypeptide reads, in one-letter code: Phospholipase A2 A2-hormotoxin-Apt1a (156 aa).

Residues 1-19 (MQLYTYFFTFSLVLILALA) form the signal peptide. Residues 20–35 (DQENKSLDFTQEGGIA) constitute a propeptide that is removed on maturation. 5 disulfides stabilise this stretch: C62–C156, C64–C80, C79–C138, C86–C131, and C115–C129. Residues G65 and G67 each contribute to the Ca(2+) site. The active site involves H83. Residue D84 coordinates Ca(2+). D132 is an active-site residue.

Belongs to the phospholipase A2 family. Ca(2+) serves as cofactor.

It localises to the secreted. Its subcellular location is the nematocyst. The catalysed reaction is a 1,2-diacyl-sn-glycero-3-phosphocholine + H2O = a 1-acyl-sn-glycero-3-phosphocholine + a fatty acid + H(+). Its function is as follows. Sea anemone phospholipase A2 (PLA2) that may have a role both in defense and in digestion, since its expression and enzymatic activity were found both in the acontia (defensive organs) and tentacles. PLA2 catalyzes the calcium-dependent hydrolysis of the 2-acyl groups in 3-sn-phosphoglycerides. This is Phospholipase A2 A2-hormotoxin-Apt1a from Adamsia palliata (Cloak anemone).